Reading from the N-terminus, the 178-residue chain is PRA1 family protein 2 (178 aa).

The Cytoplasmic portion of the chain corresponds to 1-41 (MSEVRLPPLRALDDFVLGSARLAAPDPCDPQRWCHRVINNL). A helical membrane pass occupies residues 42–62 (LYYQTNYLLCFGIGLALAGYV). Residues 63-64 (RP) are Extracellular-facing. Residues 65–85 (LHTLLSALVVAVALGVLVWAA) form a helical membrane-spanning segment. Over 86–96 (ETRAAVRRCRR) the chain is Cytoplasmic. The helical transmembrane segment at 97–119 (SHPAACLAAVLAVGLLVLWVAGG) threads the bilayer. Residues 120–122 (ACT) lie on the Extracellular side of the membrane. A helical transmembrane segment spans residues 123 to 140 (FLFSIAGPVLLILVHASL). The Cytoplasmic portion of the chain corresponds to 141–178 (RLRNLKNKIENKIESIGLKRTPMGLLLEALGQEQEAGS).

It belongs to the PRA1 family. In terms of assembly, interacts with CCR5 and GDE1. As to expression, strong expression in the brain, small intestine, lung, spleen, and pancreas as well as in tumor tissues of the breast, colon, lung and ovary, with a weaker expression in normal tissues of the same patient. High expression in neuroblastic tumors. Strongly expressed in Purkinje cells and more moderately in cells of the molecular and the granular layers in the cerebellum. Detected in neuronal cells, but not in non-neuronal cells in the cerebral cortex, hippocampus, and lateral ventricles.

The protein resides in the endosome membrane. Functionally, may be involved in ER/Golgi transport and vesicular traffic. Plays a proapoptotic role in cerulenin-induced neuroblastoma apoptosis. This chain is PRA1 family protein 2 (PRAF2), found in Homo sapiens (Human).